Consider the following 188-residue polypeptide: ATP-dependent protease subunit HslV (188 aa).

The active site involves T7. Na(+) contacts are provided by G162, C165, and S168.

This sequence belongs to the peptidase T1B family. HslV subfamily. In terms of assembly, a double ring-shaped homohexamer of HslV is capped on each side by a ring-shaped HslU homohexamer. The assembly of the HslU/HslV complex is dependent on binding of ATP.

It is found in the cytoplasm. The catalysed reaction is ATP-dependent cleavage of peptide bonds with broad specificity.. Its activity is regulated as follows. Allosterically activated by HslU binding. Protease subunit of a proteasome-like degradation complex believed to be a general protein degrading machinery. In Thiobacillus denitrificans (strain ATCC 25259 / T1), this protein is ATP-dependent protease subunit HslV.